The following is a 122-amino-acid chain: Serum amyloid A-3 protein (122 aa).

An N-terminal signal peptide occupies residues 1–18 (MKPSIAIILCILILGVDS). The segment at 87 to 122 (TGHGAEDSRADQFANEWGRSGKDPNHFRPAGLPKRY) is disordered.

This sequence belongs to the SAA family. As to expression, found in various tissues.

It is found in the secreted. In terms of biological role, major acute phase reactant. Apolipoprotein of the HDL complex. In vitro exhibits antimicrobial activity against Escherichia coli, Streptococcus uberis and Pseudomonas aeruginosa. The polypeptide is Serum amyloid A-3 protein (Saa3) (Mus musculus (Mouse)).